Reading from the N-terminus, the 812-residue chain is Phenylalanine--tRNA ligase beta subunit (812 aa).

The tRNA-binding domain occupies 39–155 (SKTFAPFTIA…ADAPVGAGYA (117 aa)). The B5 domain occupies 405 to 480 (PEDRVIDFPL…RIVGVDKVPM (76 aa)). Positions 458, 464, 467, and 468 each coordinate Mg(2+). In terms of domain architecture, FDX-ACB spans 718–811 (PAFQPVSRDF…VAKRTGGSLR (94 aa)).

It belongs to the phenylalanyl-tRNA synthetase beta subunit family. Type 1 subfamily. In terms of assembly, tetramer of two alpha and two beta subunits. Mg(2+) serves as cofactor.

It is found in the cytoplasm. It catalyses the reaction tRNA(Phe) + L-phenylalanine + ATP = L-phenylalanyl-tRNA(Phe) + AMP + diphosphate + H(+). The chain is Phenylalanine--tRNA ligase beta subunit from Nitrobacter winogradskyi (strain ATCC 25391 / DSM 10237 / CIP 104748 / NCIMB 11846 / Nb-255).